The primary structure comprises 55 residues: ATP synthase F(0) complex subunit 8 (55 aa).

The chain crosses the membrane as a helical span at residues 7-24 (NPWFFIMLLSWLTFSLII). The disordered stretch occupies residues 35-55 (NPPSNKTTTHTKTTPWTWPWT). A compositionally biased stretch (low complexity) spans 37 to 55 (PSNKTTTHTKTTPWTWPWT).

It belongs to the ATPase protein 8 family. As to quaternary structure, component of the ATP synthase complex composed at least of ATP5F1A/subunit alpha, ATP5F1B/subunit beta, ATP5MC1/subunit c (homooctomer), MT-ATP6/subunit a, MT-ATP8/subunit 8, ATP5ME/subunit e, ATP5MF/subunit f, ATP5MG/subunit g, ATP5MK/subunit k, ATP5MJ/subunit j, ATP5F1C/subunit gamma, ATP5F1D/subunit delta, ATP5F1E/subunit epsilon, ATP5PF/subunit F6, ATP5PB/subunit b, ATP5PD/subunit d, ATP5PO/subunit OSCP. ATP synthase complex consists of a soluble F(1) head domain (subunits alpha(3) and beta(3)) - the catalytic core - and a membrane F(0) domain - the membrane proton channel (subunits c, a, 8, e, f, g, k and j). These two domains are linked by a central stalk (subunits gamma, delta, and epsilon) rotating inside the F1 region and a stationary peripheral stalk (subunits F6, b, d, and OSCP).

The protein resides in the mitochondrion membrane. In terms of biological role, subunit 8, of the mitochondrial membrane ATP synthase complex (F(1)F(0) ATP synthase or Complex V) that produces ATP from ADP in the presence of a proton gradient across the membrane which is generated by electron transport complexes of the respiratory chain. ATP synthase complex consist of a soluble F(1) head domain - the catalytic core - and a membrane F(1) domain - the membrane proton channel. These two domains are linked by a central stalk rotating inside the F(1) region and a stationary peripheral stalk. During catalysis, ATP synthesis in the catalytic domain of F(1) is coupled via a rotary mechanism of the central stalk subunits to proton translocation. In vivo, can only synthesize ATP although its ATP hydrolase activity can be activated artificially in vitro. Part of the complex F(0) domain. This Chaetura pelagica (Chimney swift) protein is ATP synthase F(0) complex subunit 8.